The chain runs to 276 residues: 2,3,4,5-tetrahydropyridine-2,6-dicarboxylate N-succinyltransferase (276 aa).

Positions 104 and 141 each coordinate substrate.

It belongs to the transferase hexapeptide repeat family. Homotrimer.

The protein resides in the cytoplasm. The catalysed reaction is (S)-2,3,4,5-tetrahydrodipicolinate + succinyl-CoA + H2O = (S)-2-succinylamino-6-oxoheptanedioate + CoA. It participates in amino-acid biosynthesis; L-lysine biosynthesis via DAP pathway; LL-2,6-diaminopimelate from (S)-tetrahydrodipicolinate (succinylase route): step 1/3. The protein is 2,3,4,5-tetrahydropyridine-2,6-dicarboxylate N-succinyltransferase of Legionella pneumophila (strain Corby).